The sequence spans 456 residues: tRNA-2-methylthio-N(6)-dimethylallyladenosine synthase (456 aa).

The 119-residue stretch at 19 to 137 (KHFFIETWGC…FPEYLHRVQV (119 aa)) folds into the MTTase N-terminal domain. [4Fe-4S] cluster is bound by residues C28, C64, C98, C174, C178, and C181. One can recognise a Radical SAM core domain in the interval 160–392 (RKSNVKAFVT…AVNEGIVVGN (233 aa)). Positions 393–456 (KAAEGKIYEV…SFSLVGEVVE (64 aa)) constitute a TRAM domain.

It belongs to the methylthiotransferase family. MiaB subfamily. In terms of assembly, monomer. Requires [4Fe-4S] cluster as cofactor.

The protein resides in the cytoplasm. It catalyses the reaction N(6)-dimethylallyladenosine(37) in tRNA + (sulfur carrier)-SH + AH2 + 2 S-adenosyl-L-methionine = 2-methylsulfanyl-N(6)-dimethylallyladenosine(37) in tRNA + (sulfur carrier)-H + 5'-deoxyadenosine + L-methionine + A + S-adenosyl-L-homocysteine + 2 H(+). In terms of biological role, catalyzes the methylthiolation of N6-(dimethylallyl)adenosine (i(6)A), leading to the formation of 2-methylthio-N6-(dimethylallyl)adenosine (ms(2)i(6)A) at position 37 in tRNAs that read codons beginning with uridine. The polypeptide is tRNA-2-methylthio-N(6)-dimethylallyladenosine synthase (Clostridium botulinum (strain Eklund 17B / Type B)).